The following is a 117-amino-acid chain: uncharacterized protein (117 aa).

The first 22 residues, 1 to 22, serve as a signal peptide directing secretion; it reads MHVKYLAGIVGAALLMAGCSSS.

This is an uncharacterized protein from Escherichia coli O6:H1 (strain CFT073 / ATCC 700928 / UPEC).